The following is a 452-amino-acid chain: Bifunctional protein GlmU (452 aa).

Residues 1–226 (MSLTTVILAA…PMEVEGANNR (226 aa)) form a pyrophosphorylase region. UDP-N-acetyl-alpha-D-glucosamine contacts are provided by residues 8 to 11 (LAAG), lysine 22, glutamine 73, 78 to 79 (GT), 100 to 102 (YGD), glycine 137, glutamate 151, asparagine 166, and asparagine 224. A Mg(2+)-binding site is contributed by aspartate 102. Asparagine 224 is a binding site for Mg(2+). The segment at 227-247 (IQLAGLERAYQAWQAQELMLN) is linker. Positions 248-452 (GATLADPARI…LDGWKRPVKK (205 aa)) are N-acetyltransferase. UDP-N-acetyl-alpha-D-glucosamine is bound by residues arginine 330 and lysine 348. The active-site Proton acceptor is histidine 360. Residues tyrosine 363 and asparagine 374 each contribute to the UDP-N-acetyl-alpha-D-glucosamine site. Acetyl-CoA contacts are provided by residues alanine 377, 383–384 (NY), serine 402, alanine 420, and arginine 437.

In the N-terminal section; belongs to the N-acetylglucosamine-1-phosphate uridyltransferase family. It in the C-terminal section; belongs to the transferase hexapeptide repeat family. Homotrimer. The cofactor is Mg(2+).

Its subcellular location is the cytoplasm. It carries out the reaction alpha-D-glucosamine 1-phosphate + acetyl-CoA = N-acetyl-alpha-D-glucosamine 1-phosphate + CoA + H(+). The catalysed reaction is N-acetyl-alpha-D-glucosamine 1-phosphate + UTP + H(+) = UDP-N-acetyl-alpha-D-glucosamine + diphosphate. It participates in nucleotide-sugar biosynthesis; UDP-N-acetyl-alpha-D-glucosamine biosynthesis; N-acetyl-alpha-D-glucosamine 1-phosphate from alpha-D-glucosamine 6-phosphate (route II): step 2/2. The protein operates within nucleotide-sugar biosynthesis; UDP-N-acetyl-alpha-D-glucosamine biosynthesis; UDP-N-acetyl-alpha-D-glucosamine from N-acetyl-alpha-D-glucosamine 1-phosphate: step 1/1. It functions in the pathway bacterial outer membrane biogenesis; LPS lipid A biosynthesis. In terms of biological role, catalyzes the last two sequential reactions in the de novo biosynthetic pathway for UDP-N-acetylglucosamine (UDP-GlcNAc). The C-terminal domain catalyzes the transfer of acetyl group from acetyl coenzyme A to glucosamine-1-phosphate (GlcN-1-P) to produce N-acetylglucosamine-1-phosphate (GlcNAc-1-P), which is converted into UDP-GlcNAc by the transfer of uridine 5-monophosphate (from uridine 5-triphosphate), a reaction catalyzed by the N-terminal domain. This chain is Bifunctional protein GlmU, found in Pseudoalteromonas translucida (strain TAC 125).